The following is a 136-amino-acid chain: Nucleoside diphosphate kinase (136 aa).

K10, F58, R86, T92, R104, and N114 together coordinate ATP. The active-site Pros-phosphohistidine intermediate is H117.

Belongs to the NDK family. Homotetramer. Requires Mg(2+) as cofactor.

It is found in the cytoplasm. The catalysed reaction is a 2'-deoxyribonucleoside 5'-diphosphate + ATP = a 2'-deoxyribonucleoside 5'-triphosphate + ADP. The enzyme catalyses a ribonucleoside 5'-diphosphate + ATP = a ribonucleoside 5'-triphosphate + ADP. Functionally, major role in the synthesis of nucleoside triphosphates other than ATP. The ATP gamma phosphate is transferred to the NDP beta phosphate via a ping-pong mechanism, using a phosphorylated active-site intermediate. The protein is Nucleoside diphosphate kinase of Mycolicibacterium gilvum (strain PYR-GCK) (Mycobacterium gilvum (strain PYR-GCK)).